The following is a 238-amino-acid chain: Small ribosomal subunit protein uS2 (238 aa).

The protein belongs to the universal ribosomal protein uS2 family.

This is Small ribosomal subunit protein uS2 from Synechococcus sp. (strain CC9605).